The sequence spans 126 residues: Fluoride-specific ion channel FluC (126 aa).

Transmembrane regions (helical) follow at residues 6–26 (FVAV…FAVL), 36–56 (YGTL…VGFF), 69–89 (LAIT…SEVV), and 99–119 (WAGL…AFGL). Glycine 76 and threonine 79 together coordinate Na(+).

The protein belongs to the fluoride channel Fluc/FEX (TC 1.A.43) family.

The protein localises to the cell inner membrane. The catalysed reaction is fluoride(in) = fluoride(out). With respect to regulation, na(+) is not transported, but it plays an essential structural role and its presence is essential for fluoride channel function. In terms of biological role, fluoride-specific ion channel. Important for reducing fluoride concentration in the cell, thus reducing its toxicity. The protein is Fluoride-specific ion channel FluC of Cupriavidus necator (strain ATCC 17699 / DSM 428 / KCTC 22496 / NCIMB 10442 / H16 / Stanier 337) (Ralstonia eutropha).